The primary structure comprises 123 residues: Protein Wnt-7(I) (123 aa).

Ser1 is lipidated: O-palmitoleoyl serine; by PORCN. Cys89 and Cys104 are oxidised to a cystine. Asn90 carries an N-linked (GlcNAc...) asparagine glycan. The Microbody targeting signal motif lies at 121–123; it reads CKF.

Belongs to the Wnt family. Palmitoleoylation is required for efficient binding to frizzled receptors. Depalmitoleoylation leads to Wnt signaling pathway inhibition.

It is found in the secreted. The protein localises to the extracellular space. Its subcellular location is the extracellular matrix. Ligand for members of the frizzled family of seven transmembrane receptors. Probable developmental protein. May be a signaling molecule which affects the development of discrete regions of tissues. Is likely to signal over only few cell diameters. This chain is Protein Wnt-7(I) (WNT-7(I)), found in Eptatretus stoutii (Pacific hagfish).